Reading from the N-terminus, the 371-residue chain is Homoserine O-acetyltransferase (371 aa).

The AB hydrolase-1 domain occupies 44 to 350 (NAILVEHAWT…SYGHDAFLLE (307 aa)). Catalysis depends on serine 150, which acts as the Nucleophile. Arginine 217 provides a ligand contact to substrate. Residues aspartate 311 and histidine 344 contribute to the active site. Aspartate 345 lines the substrate pocket.

This sequence belongs to the AB hydrolase superfamily. MetX family. In terms of assembly, homodimer.

The protein localises to the cytoplasm. The enzyme catalyses L-homoserine + acetyl-CoA = O-acetyl-L-homoserine + CoA. It functions in the pathway amino-acid biosynthesis; L-methionine biosynthesis via de novo pathway; O-acetyl-L-homoserine from L-homoserine: step 1/1. Transfers an acetyl group from acetyl-CoA to L-homoserine, forming acetyl-L-homoserine. In Pelobacter propionicus (strain DSM 2379 / NBRC 103807 / OttBd1), this protein is Homoserine O-acetyltransferase.